Consider the following 75-residue polypeptide: UPF0154 protein MMOB4450 (75 aa).

A helical transmembrane segment spans residues 7 to 27 (IGLIVGLSILFTIVGLVVGFF).

Belongs to the UPF0154 family.

It localises to the cell membrane. In Mycoplasma mobile (strain ATCC 43663 / 163K / NCTC 11711) (Mesomycoplasma mobile), this protein is UPF0154 protein MMOB4450.